The sequence spans 134 residues: Small ribosomal subunit protein uS11 (134 aa).

Positions 1–21 (MPPKSRQGAGRKVRRKEKKNV) are disordered. A compositionally biased stretch (basic residues) spans 9-21 (AGRKVRRKEKKNV).

Belongs to the universal ribosomal protein uS11 family. In terms of assembly, part of the 30S ribosomal subunit. Interacts with proteins S7 and S18. Binds to IF-3.

In terms of biological role, located on the platform of the 30S subunit, it bridges several disparate RNA helices of the 16S rRNA. Forms part of the Shine-Dalgarno cleft in the 70S ribosome. This is Small ribosomal subunit protein uS11 from Thermobifida fusca (strain YX).